A 368-amino-acid polypeptide reads, in one-letter code: Transcription factor TGA1 (368 aa).

Residues 53-65 are compositionally biased toward polar residues; the sequence is LDNNVSEDTSHGT. Positions 53–83 are disordered; it reads LDNNVSEDTSHGTAGTPHMFDQEASTSRHPD. The region spanning 82–145 is the bZIP domain; the sequence is PDKIQRRLAQ…NGIDTNSLGF (64 aa). Coiled-coil stretches lie at residues 83–131 and 261–281; these read DKIQ…RQQG and NLKQ…EKLQ. Residues 84–104 are basic motif; that stretch reads KIQRRLAQNREAARKSRLRKK. The segment at 110–124 is leucine-zipper; sequence LETSRLKLIQLEQEL. The DOG1 domain maps to 153 to 363; sequence IAAFEMEYGH…RALSSSWATR (211 aa). Residues C260 and C266 are joined by a disulfide bond.

Belongs to the bZIP family. In terms of assembly, binds DNA as a dimer. The reduced form interacts with NPR1. In terms of tissue distribution, predominantly expressed in roots.

It is found in the nucleus. Transcriptional activator that binds specifically to the DNA sequence 5'-TGACG-3'. Recognizes ocs elements like the as-1 motif of the cauliflower mosaic virus 35S promoter. Binding to the as-1-like cis elements mediate auxin- and salicylic acid-inducible transcription. May be involved in the induction of the systemic acquired resistance (SAR) via its interaction with NPR1. Could also bind to the Hex-motif (5'-TGACGTGG-3') another cis-acting element found in plant histone promoters. The sequence is that of Transcription factor TGA1 (TGA1) from Arabidopsis thaliana (Mouse-ear cress).